Consider the following 134-residue polypeptide: Prolactin (134 aa).

C126 and C134 are oxidised to a cystine.

The protein belongs to the somatotropin/prolactin family.

It localises to the secreted. The chain is Prolactin from Bufo japonicus (Japanese common toad).